The following is a 346-amino-acid chain: Acetylpolyamine amidohydrolase 1 (346 aa).

The active-site Proton donor/acceptor is His161. 3 residues coordinate Zn(2+): Asp197, His199, and Asp286.

Belongs to the histone deacetylase family. Homodimer. Zn(2+) serves as cofactor.

It carries out the reaction N-acetylputrescine + H2O = putrescine + acetate. It catalyses the reaction N-acetylcadaverine + H2O = cadaverine + acetate. The enzyme catalyses N(1)-acetylspermine + H2O = spermine + acetate. The catalysed reaction is N(1)-acetylspermidine + H2O = spermidine + acetate. The protein operates within amine and polyamine metabolism. Catalyzes the deacetylation of acetylated polyamines such as N-acetylputrescine, N-acetylcadaverine, N(1)-acetylspermine and N(1)-acetylspermidine. Plays an important role in the metabolism of acetylated polyamines in P.aeruginosa. Is involved in the degradation pathways of N-acetylputrescine and N-acetylcadaverine, that allow P.aeruginosa to utilize these acetylpolyamines as a carbon source under glucose starvation. In vitro, can also hydrolyze artificial trifluoroacetylated and acetylated lysine-derivatives. The chain is Acetylpolyamine amidohydrolase 1 from Pseudomonas aeruginosa (strain ATCC 15692 / DSM 22644 / CIP 104116 / JCM 14847 / LMG 12228 / 1C / PRS 101 / PAO1).